The following is a 311-amino-acid chain: Olfactory receptor 5L2 (311 aa).

The Extracellular portion of the chain corresponds to 1–25 (MGKENCTTVAEFILLGLSDVPELRV). Residue asparagine 5 is glycosylated (N-linked (GlcNAc...) asparagine). Residues 26–46 (CLFLLFLLIYGVTLLANLGMT) form a helical membrane-spanning segment. The Cytoplasmic portion of the chain corresponds to 47-54 (ALIQVSSR). A helical membrane pass occupies residues 55–75 (LHTPVYFFLSHLSFVDFCYSS). At 76-99 (IIVPKMLANIFNKDKAISFLGCMV) the chain is on the extracellular side. An intrachain disulfide couples cysteine 97 to cysteine 189. The chain crosses the membrane as a helical span at residues 100 to 120 (QFYLFCTCGVTEVFLLAVMAY). Residues 121-139 (DRFVAICNPLLYMVTMSQK) lie on the Cytoplasmic side of the membrane. A helical membrane pass occupies residues 140–160 (LRVELTSCCYFCGTVCSLIHS). Residues 161–196 (SLALRILFYRSNVINHFFCDLPPLLSLACSDVTVNE) lie on the Extracellular side of the membrane. Residue asparagine 195 is glycosylated (N-linked (GlcNAc...) asparagine). Residues 197 to 217 (TLLFLVATLNESVTIMIILTS) form a helical membrane-spanning segment. The Cytoplasmic portion of the chain corresponds to 218 to 237 (YLLILTTILKIHSAESRHKA). Residues 238-258 (FSTCASHLTAITVSHGTILYI) traverse the membrane as a helical segment. At 259 to 271 (YCRPSSGNSGDVD) the chain is on the extracellular side. A helical transmembrane segment spans residues 272 to 292 (KVATVFYTVVIPMLNPLIYSL). The Cytoplasmic segment spans residues 293–311 (RNKDVNKALRKVMGSKIHS).

Belongs to the G-protein coupled receptor 1 family.

The protein resides in the cell membrane. Functionally, odorant receptor. This is Olfactory receptor 5L2 (OR5L2) from Homo sapiens (Human).